The sequence spans 600 residues: Alanine--tRNA ligase (600 aa).

Histidine 463, histidine 467, cysteine 565, and histidine 569 together coordinate Zn(2+).

This sequence belongs to the class-II aminoacyl-tRNA synthetase family. It depends on Zn(2+) as a cofactor.

Its subcellular location is the cytoplasm. The catalysed reaction is tRNA(Ala) + L-alanine + ATP = L-alanyl-tRNA(Ala) + AMP + diphosphate. Functionally, catalyzes the attachment of alanine to tRNA(Ala) in a two-step reaction: alanine is first activated by ATP to form Ala-AMP and then transferred to the acceptor end of tRNA(Ala). Also edits incorrectly charged Ser-tRNA(Ala) and Gly-tRNA(Ala) via its editing domain. The protein is Alanine--tRNA ligase (alaS) of Treponema denticola (strain ATCC 35405 / DSM 14222 / CIP 103919 / JCM 8153 / KCTC 15104).